A 482-amino-acid polypeptide reads, in one-letter code: Ubiquitin carboxyl-terminal hydrolase 6 (482 aa).

Positions 2–77 (PTVSVKWQKK…LMMMGTADEI (76 aa)) constitute a Ubiquitin-like domain. Residues 104–478 (AGLVNLGNTC…MAYITMYKAR (375 aa)) form the USP domain. Cys-113 acts as the Nucleophile in catalysis. Positions 172–191 (SQFWMVLRKKYPQFSQLQNG) are calmodulin-binding. 2 stretches are compositionally biased toward basic and acidic residues: residues 350–361 (PRQKLREEEGKK) and 371–381 (GSKDSDVKMTD). Residues 350–407 (PRQKLREEEGKKLGLQTSAKSGSKDSDVKMTDAEASANGSGESSTVNPQEGTSSEKET) are disordered. Residues 382–393 (AEASANGSGESS) are compositionally biased toward low complexity. Residue His-430 is the Proton acceptor of the active site.

The protein belongs to the peptidase C19 family. As to quaternary structure, interacts with calmodulin (CaM).

It carries out the reaction Thiol-dependent hydrolysis of ester, thioester, amide, peptide and isopeptide bonds formed by the C-terminal Gly of ubiquitin (a 76-residue protein attached to proteins as an intracellular targeting signal).. Functionally, recognizes and hydrolyzes the peptide bond at the C-terminal Gly of ubiquitin. Involved in the processing of poly-ubiquitin precursors as well as that of ubiquitinated proteins. This Arabidopsis thaliana (Mouse-ear cress) protein is Ubiquitin carboxyl-terminal hydrolase 6 (UBP6).